The chain runs to 111 residues: BET1-like protein (111 aa).

At 1–86 (MADWARAQSP…MARSGQDNRK (86 aa)) the chain is on the cytoplasmic side. Residues serine 9 and serine 37 each carry the phosphoserine modification. A t-SNARE coiled-coil homology domain is found at 15–77 (EILDRENKRM…TGSVKRFSTM (63 aa)). A helical; Anchor for type IV membrane protein transmembrane segment spans residues 87–107 (LLCGMAVGLIVAFFILSYFLS). The Lumenal segment spans residues 108 to 111 (RART).

In terms of assembly, component of a SNARE complex consisting of STX5, YKT6, GOSR1 and BET1L. Interacts with STX5.

The protein localises to the golgi apparatus membrane. The protein resides in the golgi apparatus. Its subcellular location is the trans-Golgi network membrane. Its function is as follows. Vesicle SNARE required for targeting and fusion of retrograde transport vesicles with the Golgi complex. Required for the integrity of the Golgi complex. This chain is BET1-like protein, found in Homo sapiens (Human).